A 145-amino-acid chain; its full sequence is Ribonuclease H (145 aa).

Positions 2–143 (SKKEVIIYTD…ADSLARKAII (142 aa)) constitute an RNase H type-1 domain. 4 residues coordinate Mg(2+): D11, E49, D71, and D135.

The protein belongs to the RNase H family. Monomer. Requires Mg(2+) as cofactor.

Its subcellular location is the cytoplasm. The enzyme catalyses Endonucleolytic cleavage to 5'-phosphomonoester.. Its function is as follows. Endonuclease that specifically degrades the RNA of RNA-DNA hybrids. This chain is Ribonuclease H, found in Wolbachia pipientis wMel.